A 177-amino-acid chain; its full sequence is ATP-dependent protease subunit HslV (177 aa).

The active site involves Thr6. Positions 162, 165, and 168 each coordinate Na(+).

Belongs to the peptidase T1B family. HslV subfamily. As to quaternary structure, a double ring-shaped homohexamer of HslV is capped on each side by a ring-shaped HslU homohexamer. The assembly of the HslU/HslV complex is dependent on binding of ATP.

It is found in the cytoplasm. The catalysed reaction is ATP-dependent cleavage of peptide bonds with broad specificity.. Its activity is regulated as follows. Allosterically activated by HslU binding. Functionally, protease subunit of a proteasome-like degradation complex believed to be a general protein degrading machinery. This is ATP-dependent protease subunit HslV from Desulfovibrio desulfuricans (strain ATCC 27774 / DSM 6949 / MB).